A 114-amino-acid chain; its full sequence is Evasin-1 (114 aa).

An N-terminal signal peptide occupies residues Met-1 to Cys-20. 4 cysteine pairs are disulfide-bonded: Cys-32–Cys-53, Cys-49–Cys-90, Cys-66–Cys-95, and Cys-85–Cys-104. Asn-39, Asn-54, and Asn-62 each carry an N-linked (GlcNAc...) asparagine glycan.

Belongs to the evasin C8 family. In terms of assembly, monomer.

Its subcellular location is the secreted. Functionally, salivary chemokine-binding protein which shows chemokine neutralizing activity and binds to host chemokines CCL3, CCL4 and CCL18. Binds to CCL3 with 1:1 stoichiometry. The polypeptide is Evasin-1 (Rhipicephalus sanguineus (Brown dog tick)).